Consider the following 348-residue polypeptide: Nicotinate-nucleotide--dimethylbenzimidazole phosphoribosyltransferase (348 aa).

Glu316 functions as the Proton acceptor in the catalytic mechanism.

This sequence belongs to the CobT family.

It carries out the reaction 5,6-dimethylbenzimidazole + nicotinate beta-D-ribonucleotide = alpha-ribazole 5'-phosphate + nicotinate + H(+). The protein operates within nucleoside biosynthesis; alpha-ribazole biosynthesis; alpha-ribazole from 5,6-dimethylbenzimidazole: step 1/2. Functionally, catalyzes the synthesis of alpha-ribazole-5'-phosphate from nicotinate mononucleotide (NAMN) and 5,6-dimethylbenzimidazole (DMB). This is Nicotinate-nucleotide--dimethylbenzimidazole phosphoribosyltransferase from Xanthomonas oryzae pv. oryzae (strain PXO99A).